A 546-amino-acid polypeptide reads, in one-letter code: Chaperonin GroEL (546 aa).

ATP-binding positions include 30-33 (TLGP), K51, 87-91 (DGTTT), G415, 479-481 (NAA), and D495. A disordered region spans residues 526 to 546 (KKDEPAMPAGGGMGGMGGMDF). A compositionally biased stretch (gly residues) spans 534 to 546 (AGGGMGGMGGMDF).

This sequence belongs to the chaperonin (HSP60) family. As to quaternary structure, forms a cylinder of 14 subunits composed of two heptameric rings stacked back-to-back. Interacts with the co-chaperonin GroES.

It is found in the cytoplasm. The catalysed reaction is ATP + H2O + a folded polypeptide = ADP + phosphate + an unfolded polypeptide.. Together with its co-chaperonin GroES, plays an essential role in assisting protein folding. The GroEL-GroES system forms a nano-cage that allows encapsulation of the non-native substrate proteins and provides a physical environment optimized to promote and accelerate protein folding. The polypeptide is Chaperonin GroEL (Xanthomonas euvesicatoria pv. vesicatoria (strain 85-10) (Xanthomonas campestris pv. vesicatoria)).